We begin with the raw amino-acid sequence, 289 residues long: Phosphatidylserine decarboxylase proenzyme (289 aa).

Residues Asp-88, His-145, and Ser-251 each act as charge relay system; for autoendoproteolytic cleavage activity in the active site. Ser-251 functions as the Schiff-base intermediate with substrate; via pyruvic acid; for decarboxylase activity in the catalytic mechanism. Ser-251 bears the Pyruvic acid (Ser); by autocatalysis mark.

It belongs to the phosphatidylserine decarboxylase family. PSD-B subfamily. Prokaryotic type I sub-subfamily. Heterodimer of a large membrane-associated beta subunit and a small pyruvoyl-containing alpha subunit. It depends on pyruvate as a cofactor. Post-translationally, is synthesized initially as an inactive proenzyme. Formation of the active enzyme involves a self-maturation process in which the active site pyruvoyl group is generated from an internal serine residue via an autocatalytic post-translational modification. Two non-identical subunits are generated from the proenzyme in this reaction, and the pyruvate is formed at the N-terminus of the alpha chain, which is derived from the carboxyl end of the proenzyme. The autoendoproteolytic cleavage occurs by a canonical serine protease mechanism, in which the side chain hydroxyl group of the serine supplies its oxygen atom to form the C-terminus of the beta chain, while the remainder of the serine residue undergoes an oxidative deamination to produce ammonia and the pyruvoyl prosthetic group on the alpha chain. During this reaction, the Ser that is part of the protease active site of the proenzyme becomes the pyruvoyl prosthetic group, which constitutes an essential element of the active site of the mature decarboxylase.

Its subcellular location is the cell membrane. The enzyme catalyses a 1,2-diacyl-sn-glycero-3-phospho-L-serine + H(+) = a 1,2-diacyl-sn-glycero-3-phosphoethanolamine + CO2. It participates in phospholipid metabolism; phosphatidylethanolamine biosynthesis; phosphatidylethanolamine from CDP-diacylglycerol: step 2/2. Catalyzes the formation of phosphatidylethanolamine (PtdEtn) from phosphatidylserine (PtdSer). In Polaromonas naphthalenivorans (strain CJ2), this protein is Phosphatidylserine decarboxylase proenzyme.